The chain runs to 749 residues: 5-methyltetrahydropteroyltriglutamate--homocysteine methyltransferase (749 aa).

5-methyltetrahydropteroyltri-L-glutamate-binding positions include 15-18 and lysine 114; that span reads RELK. L-homocysteine is bound by residues 425–427 and glutamate 478; that span reads IGS. L-methionine-binding positions include 425–427 and glutamate 478; that span reads IGS. Tryptophan 555 lines the 5-methyltetrahydropteroyltri-L-glutamate pocket. L-homocysteine is bound at residue aspartate 593. Aspartate 593 lines the L-methionine pocket. Glutamate 599 is a binding site for 5-methyltetrahydropteroyltri-L-glutamate. Residues histidine 636, cysteine 638, and glutamate 660 each coordinate Zn(2+). Histidine 689 (proton donor) is an active-site residue. Zn(2+) is bound at residue cysteine 721.

The protein belongs to the vitamin-B12 independent methionine synthase family. It depends on Zn(2+) as a cofactor.

The catalysed reaction is 5-methyltetrahydropteroyltri-L-glutamate + L-homocysteine = tetrahydropteroyltri-L-glutamate + L-methionine. The protein operates within amino-acid biosynthesis; L-methionine biosynthesis via de novo pathway; L-methionine from L-homocysteine (MetE route): step 1/1. In terms of biological role, catalyzes the transfer of a methyl group from 5-methyltetrahydrofolate to homocysteine resulting in methionine formation. The polypeptide is 5-methyltetrahydropteroyltriglutamate--homocysteine methyltransferase (Streptococcus suis (strain 05ZYH33)).